The following is a 564-amino-acid chain: Keratin, type II cytoskeletal 6B (564 aa).

Positions 1-11 (MASTSTTIRSH) are enriched in low complexity. The interval 1–23 (MASTSTTIRSHSSSRRGFSANSA) is disordered. Alanine 2 is modified (N-acetylalanine). Residues 2 to 162 (ASTSTTIRSH…DPAIQRVRAE (161 aa)) form a head region. Residues 163 to 198 (EREQIKTLNNKFASFIDKVRFLEQQNKVLDTKWTLL) are coil 1A. One can recognise an IF rod domain in the interval 163 to 476 (EREQIKTLNN…KLLEGEECRL (314 aa)). Positions 199–217 (QEQGTKTVRQNLEPLFEQY) are linker 1. Residues 218–309 (INNLRRQLDN…ALYDAELSQM (92 aa)) form a coil 1B region. The linker 12 stretch occupies residues 310–333 (QTHISDTSVVLSMDNNRNLDLDSI). Residues 334 to 472 (IAEVKAQYEE…ATYRKLLEGE (139 aa)) form a coil 2 region. A tail region spans residues 473–564 (ECRLNGEGVG…SSSSRKSYKH (92 aa)). The tract at residues 533-564 (RATGGGLSSVGGGSSTIKYTTTSSSSRKSYKH) is disordered. Residues 534–546 (ATGGGLSSVGGGS) show a composition bias toward gly residues. Positions 547-564 (STIKYTTTSSSSRKSYKH) are enriched in low complexity.

This sequence belongs to the intermediate filament family. Heterodimer of a type I and a type II keratin. KRT6 isomers associate with KRT16 and/or KRT17. In terms of tissue distribution, constitutively expressed in distinct types of epithelia such as those in oral mucosa, esophagus, papillae of tongue and hair follicle outer root sheath.

This chain is Keratin, type II cytoskeletal 6B (KRT6B), found in Homo sapiens (Human).